Consider the following 463-residue polypeptide: Probable glucan endo-1,3-beta-glucosidase eglC (463 aa).

The N-terminal stretch at 1–18 (MQLTHLLAFALSLATSEA) is a signal peptide. A glycan (N-linked (GlcNAc...) asparagine) is linked at asparagine 84. The active-site Proton donor is glutamate 128. A glycan (N-linked (GlcNAc...) asparagine) is linked at asparagine 183. The active-site Nucleophile is glutamate 239. Asparagine 312 is a glycosylation site (N-linked (GlcNAc...) asparagine). 2 disordered regions span residues 317–354 (SASA…SSAV) and 396–430 (SGSS…NSGA). Residue glycine 440 is the site of GPI-anchor amidated glycine attachment. Residues 441–463 (GASSVSGSVFGALVAVFAFVATL) constitute a propeptide, removed in mature form.

This sequence belongs to the glycosyl hydrolase 17 family. In terms of processing, the GPI-anchor is attached to the protein in the endoplasmic reticulum and serves to target the protein to the cell surface. There, the glucosamine-inositol phospholipid moiety is cleaved off and the GPI-modified mannoprotein is covalently attached via its lipidless GPI glycan remnant to the 1,6-beta-glucan of the outer cell wall layer.

The protein resides in the cell membrane. Its subcellular location is the secreted. It is found in the cell wall. The enzyme catalyses Hydrolysis of (1-&gt;3)-beta-D-glucosidic linkages in (1-&gt;3)-beta-D-glucans.. In terms of biological role, glucanases play a role in cell expansion during growth, in cell-cell fusion during mating, and in spore release during sporulation. This enzyme may be involved in beta-glucan degradation and also function biosynthetically as a transglycosylase. This is Probable glucan endo-1,3-beta-glucosidase eglC (eglC) from Aspergillus oryzae (strain ATCC 42149 / RIB 40) (Yellow koji mold).